The following is a 366-amino-acid chain: Glycine betaine monooxygenase reductase subunit (366 aa).

Residues 16 to 119 (NGRHLVRCVK…HGPVGLFNAI (104 aa)) form the FAD-binding FR-type domain. A 2Fe-2S ferredoxin-type domain is found at 282–366 (HQVEFTATGK…VPKGDVVIDY (85 aa)). [2Fe-2S] cluster is bound by residues cysteine 316, cysteine 321, cysteine 324, and cysteine 354.

The protein in the N-terminal section; belongs to the FAD-binding oxidoreductase type 6 family. As to quaternary structure, the system is composed of an oxygenase subunit (GbcA) and a reductase subunit (GbcB). Requires FAD as cofactor. The cofactor is [2Fe-2S] cluster.

It catalyses the reaction glycine betaine + NADH + O2 + H(+) = N,N-dimethylglycine + formaldehyde + NAD(+) + H2O. Functionally, involved in degradation of glycine betaine. Part of a Rieske-type oxygenase system that catalyzes the conversion of glycine betaine (GB) to dimethylglycine (DMG). This subunit is the ferredoxin reductase component of the system. Required for growth on choline and GB, but not for growth on DMG. This chain is Glycine betaine monooxygenase reductase subunit, found in Pseudomonas aeruginosa (strain ATCC 15692 / DSM 22644 / CIP 104116 / JCM 14847 / LMG 12228 / 1C / PRS 101 / PAO1).